Consider the following 358-residue polypeptide: Trans-enoyl reductase pvhC (358 aa).

Position 48–51 (48–51 (VDSK)) interacts with NADP(+). A substrate-binding site is contributed by 134–141 (ISFLTSGL). Residues 169-172 (SSSC), 192-195 (SPHN), tyrosine 210, and 257-258 (LE) each bind NADP(+). Residue 278 to 282 (GPSLL) participates in substrate binding. Position 347 to 348 (347 to 348 (VS)) interacts with NADP(+).

It belongs to the zinc-containing alcohol dehydrogenase family. Monomer.

The protein operates within secondary metabolite biosynthesis. Its function is as follows. Trans-enoyl reductase; part of the gene cluster that mediates the biosynthesis of varicidin A, an antifungal natural product containing a cis-octahydrodecalin core. The PKS module of pvhA together with the enoylreductase pvhC catalyze the formation of the polyketide unit which is then conjugated to L-isoleucine by the condensation domain of the NRPS module. Activity of the Dieckmann cyclase domain (RED) of pvhA results in release of an acyclic tetramate. The cytochrome P450 monooxygenase pvhE then catalyzes the oxidation of the C21 methyl group to a to carboxylate group. The methyltransferase pvhD then further methylates the pvhE product. The Diels-Alderase pvhB is able to catalyze Diels-Alder cycloaddition using both pvhE and pvhD products as substrates to form the decalin ring, yielding varicidin B and A, respectively. This Talaromyces variabilis (Penicillium variabile) protein is Trans-enoyl reductase pvhC.